Consider the following 430-residue polypeptide: Enolase (430 aa).

Residue Q163 participates in (2R)-2-phosphoglycerate binding. The active-site Proton donor is E205. 3 residues coordinate Mg(2+): D242, E287, and D314. Positions 339, 368, 369, and 390 each coordinate (2R)-2-phosphoglycerate. Residue K339 is the Proton acceptor of the active site.

It belongs to the enolase family. Mg(2+) is required as a cofactor.

Its subcellular location is the cytoplasm. The protein localises to the secreted. It localises to the cell surface. The enzyme catalyses (2R)-2-phosphoglycerate = phosphoenolpyruvate + H2O. It participates in carbohydrate degradation; glycolysis; pyruvate from D-glyceraldehyde 3-phosphate: step 4/5. In terms of biological role, catalyzes the reversible conversion of 2-phosphoglycerate (2-PG) into phosphoenolpyruvate (PEP). It is essential for the degradation of carbohydrates via glycolysis. The polypeptide is Enolase (Exiguobacterium sp. (strain ATCC BAA-1283 / AT1b)).